An 86-amino-acid chain; its full sequence is Class II hydrophobin 2 (86 aa).

The signal sequence occupies residues 1–15 (MQFFAVALFATSALA). Intrachain disulfides connect cysteine 18/cysteine 67, cysteine 28/cysteine 58, cysteine 29/cysteine 41, and cysteine 68/cysteine 79.

Belongs to the cerato-ulmin hydrophobin family. As to quaternary structure, homodimer. Homodimers further self-assemble to form highly ordered films at water-air interfaces through intermolecular interactions.

It localises to the secreted. It is found in the spore wall. The protein resides in the cell wall. Functionally, aerial growth, conidiation, and dispersal of filamentous fungi in the environment rely upon a capability of their secreting small amphipathic proteins called hydrophobins (HPBs) with low sequence identity. Class I can self-assemble into an outermost layer of rodlet bundles on aerial cell surfaces, conferring cellular hydrophobicity that supports fungal growth, development and dispersal; whereas Class II form highly ordered films at water-air interfaces through intermolecular interactions but contribute nothing to the rodlet structure. Hbf2 is a class II hydrophobin that is involved in sporuration. The sequence is that of Class II hydrophobin 2 from Hypocrea jecorina (Trichoderma reesei).